Here is a 698-residue protein sequence, read N- to C-terminus: Polyribonucleotide nucleotidyltransferase (698 aa).

2 residues coordinate Mg(2+): aspartate 487 and aspartate 493. In terms of domain architecture, KH spans 555–614 (PKIIQIQIDPQKIGDVVGQRGKTINAIIEQTGVKIDINDEGAVSVCGTDKDMMDKAINMI). One can recognise an S1 motif domain in the interval 624–692 (GQVFEGKVIS…KMGRISFSIK (69 aa)).

The protein belongs to the polyribonucleotide nucleotidyltransferase family. The cofactor is Mg(2+).

It localises to the cytoplasm. The catalysed reaction is RNA(n+1) + phosphate = RNA(n) + a ribonucleoside 5'-diphosphate. Functionally, involved in mRNA degradation. Catalyzes the phosphorolysis of single-stranded polyribonucleotides processively in the 3'- to 5'-direction. This Lachnoclostridium phytofermentans (strain ATCC 700394 / DSM 18823 / ISDg) (Clostridium phytofermentans) protein is Polyribonucleotide nucleotidyltransferase.